We begin with the raw amino-acid sequence, 353 residues long: Polyprenal reductase 2 (353 aa).

A run of 6 helical transmembrane segments spans residues 11 to 31 (PLLC…ALPI), 78 to 98 (FMHF…AIWF), 175 to 195 (MHIV…LSLA), 234 to 254 (PLLK…WGSL), 291 to 308 (YLAE…SGAE), and 313 to 335 (WFLF…NWYL).

It belongs to the steroid 5-alpha reductase family. Polyprenal reductase subfamily.

It localises to the cell membrane. It catalyses the reaction a di-trans,poly-cis-dolichal + NADP(+) = a di-trans,poly-cis-polyprenal + NADPH + H(+). The protein operates within protein modification; protein glycosylation. In terms of biological role, plays a key role in early steps of protein N-linked glycosylation by being involved in the conversion of polyprenol into dolichol. Acts as a polyprenal reductase that mediates the reduction of polyprenal into dolichal in a NADP-dependent mechanism. Dolichols are required for the synthesis of dolichol-linked monosaccharides and the oligosaccharide precursor used for N-glycosylation. This Oryza sativa subsp. japonica (Rice) protein is Polyprenal reductase 2.